The primary structure comprises 223 residues: Triosephosphate isomerase (223 aa).

6-8 contacts substrate; that stretch reads NLK. His86 functions as the Electrophile in the catalytic mechanism. The active-site Proton acceptor is Glu151. Substrate contacts are provided by Gly157 and Ser187.

It belongs to the triosephosphate isomerase family. In terms of assembly, homodimer.

The protein localises to the cytoplasm. It carries out the reaction D-glyceraldehyde 3-phosphate = dihydroxyacetone phosphate. The protein operates within carbohydrate biosynthesis; gluconeogenesis. It functions in the pathway carbohydrate degradation; glycolysis; D-glyceraldehyde 3-phosphate from glycerone phosphate: step 1/1. Involved in the gluconeogenesis. Catalyzes stereospecifically the conversion of dihydroxyacetone phosphate (DHAP) to D-glyceraldehyde-3-phosphate (G3P). The protein is Triosephosphate isomerase of Campylobacter jejuni subsp. jejuni serotype O:2 (strain ATCC 700819 / NCTC 11168).